Here is a 368-residue protein sequence, read N- to C-terminus: Glucose 1-dehydrogenase 2 (368 aa).

Zn(2+) is bound at residue C41. T43 is a substrate binding site. H68 and E69 together coordinate Zn(2+). N91 is a substrate binding site. 5 residues coordinate Zn(2+): C95, C98, C101, C109, and Q152. Substrate contacts are provided by Q152 and D156. NADP(+) contacts are provided by residues 213 to 215 (NRR), 279 to 281 (FGF), 307 to 309 (LDN), and K356. N309 contributes to the substrate binding site.

The protein belongs to the zinc-containing alcohol dehydrogenase family. Glucose 1-dehydrogenase subfamily. It depends on Zn(2+) as a cofactor.

It catalyses the reaction D-glucose + NAD(+) = D-glucono-1,5-lactone + NADH + H(+). The catalysed reaction is D-glucose + NADP(+) = D-glucono-1,5-lactone + NADPH + H(+). Its function is as follows. Catalyzes the NAD(P)(+)-dependent oxidation of D-glucose to D-gluconate via gluconolactone. Can utilize both NAD(+) and NADP(+) as electron acceptor. Is involved in the degradation of glucose through a non-phosphorylative variant of the Entner-Doudoroff pathway. The chain is Glucose 1-dehydrogenase 2 from Saccharolobus solfataricus (strain ATCC 35092 / DSM 1617 / JCM 11322 / P2) (Sulfolobus solfataricus).